A 1908-amino-acid polypeptide reads, in one-letter code: Putative ankyrin repeat protein L484 (1908 aa).

ANK repeat units follow at residues 20 to 50, 60 to 97, 101 to 130, 134 to 167, and 1370 to 1399; these read DIME…KFNI, PNKT…PMDL, DNVW…SIDR, SNNT…DIDK, and DGNT…NPFT. Residues 1539–1603 are a coiled coil; the sequence is VQLLNPKLRD…QTNISDLEFK (65 aa).

The protein resides in the virion. The sequence is that of Putative ankyrin repeat protein L484 from Acanthamoeba polyphaga mimivirus (APMV).